The following is a 291-amino-acid chain: MKIKTPLTVKAFAKINLGLFITRKRDDGYHTLSTLFAPIDWYDILSFSAADAIEMSCTNPDLPVDDSNLCVRAARLLQDEGGVKEGVSMLLDKRVPFGAGLGGGSSDAATVLRVLNSFWDINLSSVDLHRFAVSLGADVPYFLEMQGLAYAGGIGDELVDLNMTIPWFIVTVFPCEHISTAWAYGHFHRRFELERPDLRALAPQLSSDGKTELLPLFENDFESAVFEQFGNVRQVKTDLLSAGALFSSLSGSGSAVYGLFEGESAAREVMAAMEAKCYPVSLTPPGFSMRQ.

Residue Lys-14 is part of the active site. An ATP-binding site is contributed by 96–106 (PFGAGLGGGSS). Asp-138 is a catalytic residue.

It belongs to the GHMP kinase family. IspE subfamily.

The enzyme catalyses 4-CDP-2-C-methyl-D-erythritol + ATP = 4-CDP-2-C-methyl-D-erythritol 2-phosphate + ADP + H(+). It participates in isoprenoid biosynthesis; isopentenyl diphosphate biosynthesis via DXP pathway; isopentenyl diphosphate from 1-deoxy-D-xylulose 5-phosphate: step 3/6. Functionally, catalyzes the phosphorylation of the position 2 hydroxy group of 4-diphosphocytidyl-2C-methyl-D-erythritol. The chain is 4-diphosphocytidyl-2-C-methyl-D-erythritol kinase from Chlorobium phaeovibrioides (strain DSM 265 / 1930) (Prosthecochloris vibrioformis (strain DSM 265)).